The sequence spans 912 residues: Probable dipeptidyl-aminopeptidase B (912 aa).

Residues 1–25 (MAAEKGESSDEERKPLTRDSMEYRD) show a composition bias toward basic and acidic residues. Disordered stretches follow at residues 1-31 (MAAE…NSLH) and 49-70 (GSTH…SDDG). Residues 1–92 (MAAEKGESSD…GGKPVQKKVK (92 aa)) lie on the Cytoplasmic side of the membrane. Residues 93–113 (IVLGFLLFLCLSGWSLSFVLF) traverse the membrane as a helical; Signal-anchor for type II membrane protein segment. Residues 114–912 (LFGGHESSKT…RAAIWVGLSI (799 aa)) are Vacuolar-facing. N-linked (GlcNAc...) asparagine glycosylation is found at Asn130, Asn210, Asn346, Asn569, and Asn656. Ser751 serves as the catalytic Charge relay system. An N-linked (GlcNAc...) asparagine glycan is attached at Asn810. Residues Asp828 and His861 each act as charge relay system in the active site. A glycan (N-linked (GlcNAc...) asparagine) is linked at Asn897.

It belongs to the peptidase S9B family.

The protein resides in the vacuole membrane. It catalyses the reaction Release of an N-terminal dipeptide, Xaa-Yaa-|-Zaa-, from a polypeptide, preferentially when Yaa is Pro, provided Zaa is neither Pro nor hydroxyproline.. Functionally, type IV dipeptidyl-peptidase which removes N-terminal dipeptides sequentially from polypeptides having unsubstituted N-termini provided that the penultimate residue is proline. The sequence is that of Probable dipeptidyl-aminopeptidase B (DAPB) from Paracoccidioides lutzii (strain ATCC MYA-826 / Pb01) (Paracoccidioides brasiliensis).